The chain runs to 88 residues: Sec-independent protein translocase protein TatA (88 aa).

Residues 1–21 form a helical membrane-spanning segment; sequence MGSIGWAQLLIIAVIVVLLFG. The disordered stretch occupies residues 41–88; it reads KAMGDDSQTPPTNVDKTSNDADFAKSITEKQQPVAKAEESKSHEKEQG. Residues 46–56 are compositionally biased toward polar residues; sequence DSQTPPTNVDK. Residues 76 to 88 are compositionally biased toward basic and acidic residues; the sequence is KAEESKSHEKEQG.

It belongs to the TatA/E family. The Tat system comprises two distinct complexes: a TatABC complex, containing multiple copies of TatA, TatB and TatC subunits, and a separate TatA complex, containing only TatA subunits. Substrates initially bind to the TatABC complex, which probably triggers association of the separate TatA complex to form the active translocon.

It is found in the cell inner membrane. Its function is as follows. Part of the twin-arginine translocation (Tat) system that transports large folded proteins containing a characteristic twin-arginine motif in their signal peptide across membranes. TatA could form the protein-conducting channel of the Tat system. This Yersinia pestis protein is Sec-independent protein translocase protein TatA.